We begin with the raw amino-acid sequence, 118 residues long: Small ribosomal subunit protein uS12cz/uS12cy (118 aa).

Belongs to the universal ribosomal protein uS12 family. In terms of assembly, part of the 30S ribosomal subunit.

The protein resides in the plastid. The protein localises to the chloroplast. In terms of biological role, with S4 and S5 plays an important role in translational accuracy. Located at the interface of the 30S and 50S subunits. The sequence is that of Small ribosomal subunit protein uS12cz/uS12cy (rps12-A) from Helianthus annuus (Common sunflower).